Consider the following 199-residue polypeptide: Probable molybdenum cofactor guanylyltransferase (199 aa).

GTP-binding positions include 6–8 (LAG), Lys18, Asp65, and Asp97. Asp97 lines the Mg(2+) pocket.

It belongs to the MobA family. It depends on Mg(2+) as a cofactor.

The protein resides in the cytoplasm. The catalysed reaction is Mo-molybdopterin + GTP + H(+) = Mo-molybdopterin guanine dinucleotide + diphosphate. Its function is as follows. Transfers a GMP moiety from GTP to Mo-molybdopterin (Mo-MPT) cofactor (Moco or molybdenum cofactor) to form Mo-molybdopterin guanine dinucleotide (Mo-MGD) cofactor. The protein is Probable molybdenum cofactor guanylyltransferase of Staphylococcus aureus (strain Mu50 / ATCC 700699).